The chain runs to 360 residues: MKTWVIKIGTSILRGTEETSTEEVIETLCRSFTSFLLKGNKLILVTSGAVGLGCQKLNIKTRPNDLSTLQATAAVGQVNLMSLYDKIFNKLGHNIAQILITKADFNSRESFNNASKTLKKLIDLNVIPIVNENDTVANEELKYGDNDTLSALVALAINANKLILLTDIENLYSKDPRKNKDAHPIKEVHNSELKEIKNKNNQNSNNEWGTGGISTKLISAEIATKGGVEVQLVDGTNKKNLIEIFNDNKIGTLFYPLEKPIGNKKSWLSHAIHTVGKITLDDGAFFAINKKGASLLAVGVKNVEGNFTVNQAVKIVNTDNKEVAKGLVSISSDNLRSILNNKDNNNSSIIVVHRDVLALS.

Lysine 7 contacts ATP. Substrate-binding residues include serine 47, aspartate 134, and asparagine 146. ATP is bound by residues 166–167 (TD) and 210–216 (TGGISTK). In terms of domain architecture, PUA spans 275 to 356 (VGKITLDDGA…SSIIVVHRDV (82 aa)).

It belongs to the glutamate 5-kinase family.

The protein localises to the cytoplasm. It carries out the reaction L-glutamate + ATP = L-glutamyl 5-phosphate + ADP. The protein operates within amino-acid biosynthesis; L-proline biosynthesis; L-glutamate 5-semialdehyde from L-glutamate: step 1/2. Functionally, catalyzes the transfer of a phosphate group to glutamate to form L-glutamate 5-phosphate. The polypeptide is Glutamate 5-kinase (Prochlorococcus marinus (strain MIT 9312)).